A 282-amino-acid polypeptide reads, in one-letter code: MFYSDYLKLLKIFVVGVFPCTLFVNAPHGKLAKQSKLFSKGYISGRVGWVLMELVAPLTFLYAIRNNRHFESTLPSLGDGSNRDYLDSCRKVLAGMFLVHYANRALVSPLLMAPQVSPMHWTVFVSAVLFNFLNGMSIGLYLVQASVQHHPVSIIRRYIGMFLWLMGWLGNMYHDNILYDLRRSSNKKKDPDNLDTVQSENSYYRIPYGGLFQYVSCPNYFCEWIEWFGCYLAAGPSAEPFWWFFLSEILLMLPRALKAHQWYCKKFPKYPANRRAIIPFLM.

5 consecutive transmembrane segments (helical) span residues 9–29, 43–63, 123–143, 158–178, and 232–252; these read LLKI…APHG, ISGR…FLYA, VFVS…LYLV, YIGM…DNIL, and LAAG…ILLM.

The protein belongs to the steroid 5-alpha reductase family.

The protein resides in the endoplasmic reticulum membrane. This is an uncharacterized protein from Schizosaccharomyces pombe (strain 972 / ATCC 24843) (Fission yeast).